Consider the following 191-residue polypeptide: Probable nicotinate-nucleotide adenylyltransferase (191 aa).

Belongs to the NadD family.

The catalysed reaction is nicotinate beta-D-ribonucleotide + ATP + H(+) = deamido-NAD(+) + diphosphate. It functions in the pathway cofactor biosynthesis; NAD(+) biosynthesis; deamido-NAD(+) from nicotinate D-ribonucleotide: step 1/1. Its function is as follows. Catalyzes the reversible adenylation of nicotinate mononucleotide (NaMN) to nicotinic acid adenine dinucleotide (NaAD). This Staphylococcus epidermidis (strain ATCC 12228 / FDA PCI 1200) protein is Probable nicotinate-nucleotide adenylyltransferase.